Here is a 262-residue protein sequence, read N- to C-terminus: MDINASRALANVYDLPDDFFPKIDDLVRDAKDALEPYWKSDSIKKHVLIATHFVDLIEDFWQTTQGMHEIAESLRAVIPPTTAPVPTGYLIQHEEAEEIPLGDLFKHQEERIVSFQPDYPITARIHAHLKAYAKINEESLDRARRLLWWHYNCLLWGEANVTNYISRLRTWLSTPEKYRGRDAPTIEAITRPIQVAQGGRKTSSGTRKPRGLEPRRRKVKTTVVYGRRRSKSRDRRAPSPQRAGSPLPRSSSSHHRSPSPRK.

Positions 183–262 (APTIEAITRP…SHHRSPSPRK (80 aa)) are disordered. Positions 215 to 233 (RRRKVKTTVVYGRRRSKSR) match the Bipartite nuclear localization signal motif. Residues 215 to 234 (RRRKVKTTVVYGRRRSKSRD) show a composition bias toward basic residues. Phosphoserine; by host is present on residues Ser-232, Ser-239, and Ser-245. A compositionally biased stretch (basic residues) spans 252 to 262 (SSHHRSPSPRK). The RNA binding stretch occupies residues 254–260 (HHRSPSP).

Belongs to the avihepadnavirus core antigen family. In terms of assembly, homodimerizes, then multimerizes.

The protein resides in the virion. Its subcellular location is the host cytoplasm. Self assembles to form an icosahedral capsid. Most capsid appear to be large particles with an icosahedral symmetry of T=4 and consist of 240 copies of capsid protein, though a fraction forms smaller T=3 particles consisting of 180 capsid proteins. Entering capsid are transported along microtubules to the nucleus. Phosphorylation of the capsid is thought to induce exposure of nuclear localization signal in the C-terminal portion of the capsid protein that allows binding to the nuclear pore complex via the importin (karyopherin-) alpha and beta. Capsids are imported in intact form through the nuclear pore into the nuclear basket, where it probably binds NUP153. Only capsids that contain the mature viral genome can release the viral DNA and capsid protein into the nucleoplasm. Immature capsids get stucked in the basket. Capsids encapsulate the pre-genomic RNA and the P protein. Pre-genomic RNA is reverse transcribed into DNA while the capsid is still in the cytoplasm. The capsid can then either be directed to the nucleus, providing more genome for transcription, or bud through the endoplasmic reticulum to provide new virions. The sequence is that of Capsid protein (C) from Anas (ducks).